The following is a 489-amino-acid chain: Betaine aldehyde dehydrogenase (489 aa).

Residues Thr-26 and Asp-93 each contribute to the K(+) site. NAD(+) is bound at residue 150-152 (GAW). The active-site Charge relay system is Lys-162. Position 176–179 (176–179 (KPSE)) interacts with NAD(+). Val-180 is a binding site for K(+). Position 229-232 (229-232 (GVET)) interacts with NAD(+). A K(+)-binding site is contributed by Leu-245. Glu-251 acts as the Proton acceptor in catalysis. 3 residues coordinate NAD(+): Gly-253, Cys-285, and Glu-386. Cys-285 (nucleophile) is an active-site residue. Cysteine sulfenic acid (-SOH) is present on Cys-285. Residues Lys-456 and Gly-459 each contribute to the K(+) site. Glu-463 serves as the catalytic Charge relay system.

The protein belongs to the aldehyde dehydrogenase family. Dimer of dimers. K(+) is required as a cofactor.

The enzyme catalyses betaine aldehyde + NAD(+) + H2O = glycine betaine + NADH + 2 H(+). Its pathway is amine and polyamine biosynthesis; betaine biosynthesis via choline pathway; betaine from betaine aldehyde: step 1/1. Functionally, involved in the biosynthesis of the osmoprotectant glycine betaine. Catalyzes the irreversible oxidation of betaine aldehyde to the corresponding acid. This Burkholderia orbicola (strain MC0-3) protein is Betaine aldehyde dehydrogenase.